Reading from the N-terminus, the 258-residue chain is MTDNALRETIIRLAQPVVHTLGLVIWGVETARAGRTIVRLFVDVPTIPQRPGMPEGSEEPSSAITAPAPAHDPQESSGAEAPAAPTSATIEQCEEISRHLALALEVEDSIADAYVLEVSTPGLSRLFFSLEQMIPYVGDVVEARLHTPVASTDPAAHGGPRRVWRGTLVAVEDDAFVLAPVTVSPEGEVEDENQPPVRLPWEAVRRATRMYIFKKPQKPGKKPGKPQGKEVPKGGSGSTAPKKAAAKKKAGRTAAEND.

Disordered stretches follow at residues 48–88 (PQRP…PTSA) and 212–258 (IFKK…AEND). Residues 215 to 224 (KPQKPGKKPG) are compositionally biased toward basic residues.

The protein belongs to the RimP family.

Its subcellular location is the cytoplasm. Required for maturation of 30S ribosomal subunits. This chain is Ribosome maturation factor RimP, found in Desulfovibrio desulfuricans (strain ATCC 27774 / DSM 6949 / MB).